We begin with the raw amino-acid sequence, 775 residues long: DENN domain-containing protein 1B (775 aa).

The uDENN domain occupies Asp-14 to Thr-143. Positions Gly-180–Lys-316 constitute a cDENN domain. Residues Gln-318–Gly-395 enclose the dDENN domain. The short motif at Phe-398 to Phe-402 is the FXDXF motif element. Tyr-520 is subject to Phosphotyrosine. 4 positions are modified to phosphoserine: Ser-535, Ser-536, Ser-549, and Ser-552. The short motif at Asp-566–Leu-575 is the Clathrin box element. 2 disordered regions span residues Asp-635 to Ser-654 and His-671 to Thr-706. A compositionally biased stretch (basic residues) spans His-639 to Val-651. Residues Ser-652 and Ser-653 each carry the phosphoserine modification. Residues Gln-695–Thr-706 show a composition bias toward basic and acidic residues.

Interacts with RAB35. Interacts with clathrin heavy chain/CLTC. Interacts with components of the adapter protein complex 2 (AP-2) AP2A2 and AP2B1. Interacts with CD3E. In terms of processing, phosphorylated on serine and/or threonine, possibly regulating the guanine nucleotide exchange factor (GEF) activity. As to expression, highly expressed in dendritic and natural killer cells and at lower levels in other myeloid lineage cells and in pituitary. Significantly up-regulated in effector memory T-cells as compared with naive T-cells.

It localises to the cytoplasm. It is found in the cytosol. The protein localises to the cytoplasmic vesicle. The protein resides in the clathrin-coated vesicle. Functionally, guanine nucleotide exchange factor (GEF) for RAB35 that acts as a regulator of T-cell receptor (TCR) internalization in TH2 cells. Acts by promoting the exchange of GDP to GTP, converting inactive GDP-bound RAB35 into its active GTP-bound form. Plays a role in clathrin-mediated endocytosis. Controls cytokine production in TH2 lymphocytes by controlling the rate of TCR internalization and routing to endosomes: acts by mediating clathrin-mediated endocytosis of TCR via its interaction with the adapter protein complex 2 (AP-2) and GEF activity. Dysregulation leads to impaired TCR down-modulation and recycling, affecting cytokine production in TH2 cells. This Homo sapiens (Human) protein is DENN domain-containing protein 1B.